A 269-amino-acid chain; its full sequence is tRNA pseudouridine synthase A (269 aa).

The active-site Nucleophile is the D55. A substrate-binding site is contributed by Y111.

The protein belongs to the tRNA pseudouridine synthase TruA family.

The enzyme catalyses uridine(38/39/40) in tRNA = pseudouridine(38/39/40) in tRNA. In terms of biological role, formation of pseudouridine at positions 38, 39 and 40 in the anticodon stem and loop of transfer RNAs. The chain is tRNA pseudouridine synthase A from Methanosarcina mazei (strain ATCC BAA-159 / DSM 3647 / Goe1 / Go1 / JCM 11833 / OCM 88) (Methanosarcina frisia).